A 188-amino-acid chain; its full sequence is Elongation factor P (188 aa).

It belongs to the elongation factor P family.

It localises to the cytoplasm. It participates in protein biosynthesis; polypeptide chain elongation. In terms of biological role, involved in peptide bond synthesis. Stimulates efficient translation and peptide-bond synthesis on native or reconstituted 70S ribosomes in vitro. Probably functions indirectly by altering the affinity of the ribosome for aminoacyl-tRNA, thus increasing their reactivity as acceptors for peptidyl transferase. The polypeptide is Elongation factor P (Rickettsia peacockii (strain Rustic)).